We begin with the raw amino-acid sequence, 660 residues long: Probable cation-transporting P-type ATPase J (660 aa).

Helical transmembrane passes span 33–53, 60–80, 94–114, 261–281, and 292–312; these read WAAL…CGAP, LFLA…LQAL, AAIG…IVIF, IGMV…GETL, and MIVA…LAAI. The active-site 4-aspartylphosphate intermediate is the Asp340. Positions 544 and 548 each coordinate Mg(2+). A helical transmembrane segment spans residues 598–618; that stretch reads IVVANLIVAVTFIAGLVVWDL.

Belongs to the cation transport ATPase (P-type) (TC 3.A.3) family. Type IB subfamily.

The protein resides in the cell membrane. The catalysed reaction is ATP + H2O = ADP + phosphate + H(+). This chain is Probable cation-transporting P-type ATPase J (ctpJ), found in Mycobacterium tuberculosis (strain CDC 1551 / Oshkosh).